An 812-amino-acid polypeptide reads, in one-letter code: Probable inorganic carbon transporter subunit DabA (812 aa).

4 residues coordinate Zn(2+): cysteine 338, aspartate 340, histidine 498, and cysteine 513.

Belongs to the inorganic carbon transporter (TC 9.A.2) DabA family. As to quaternary structure, forms a complex with DabB. It depends on Zn(2+) as a cofactor.

It is found in the cell inner membrane. Its function is as follows. Part of an energy-coupled inorganic carbon pump. The sequence is that of Probable inorganic carbon transporter subunit DabA from Methylobacterium sp. (strain 4-46).